The following is a 374-amino-acid chain: MSVKRGIGDSAFLKKKIPQNPKYQHVKTRLDTGSSLTKYMERLEEARKNYRYRKDELFKRLKVTTFAQLVIQVASVSDQNDNIKDEMAGLEDDVSIFSASPGLDCLSDQTNGSPQPNLPPPQTINIDESGDNGFSPRSTLQSVISGVGELDLDKNGQKTIRLSPVSTSNTTECPYPDCPYLLLDVRDRELYDQCHIVSAYSYPIATLSRTMNPYTKEVLDYKNASGKIIIVYDEDERIASQAATTMCERGFENLFMLSGGLKVVAQKFPEGMTTGSVPISCLPSPTGPAGRKRSAQHQTSQLAEKKWRFTAEDLDKIQHYLEEVFIPSETSSRLSSRMSTSSARSKASTVGSSRQGSSIAGSESARSRSSRPWK.

In terms of domain architecture, Rhodanese spans 176–273 (PDCPYLLLDV…VAQKFPEGMT (98 aa)). Disordered stretches follow at residues 279 to 301 (ISCLPSPTGPAGRKRSAQHQTSQ) and 329 to 374 (ETSS…RPWK). A compositionally biased stretch (low complexity) spans 329-349 (ETSSRLSSRMSTSSARSKAST).

This sequence belongs to the CEP41 family. In terms of tissue distribution, expressed in various ciliary organs, including Kupffer's vesicle, ear and heart, as well as brain and kidney.

Its subcellular location is the cytoplasm. It is found in the cytoskeleton. It localises to the microtubule organizing center. The protein localises to the centrosome. The protein resides in the cell projection. Its subcellular location is the cilium. It is found in the cilium basal body. In terms of biological role, required during ciliogenesis for tubulin glutamylation in cilium. Probably acts by participating in the transport of tubulin polyglutamylases between the basal body and the cilium. This Danio rerio (Zebrafish) protein is Centrosomal protein of 41 kDa (cep41).